The primary structure comprises 177 residues: MEEEGVKMDVKLLNVSDQEMEEMRRNVFLTTLEQLKAWARSNSLWPLTFGLACCAIEMMGVGSSHYDLDRFGSFFRTSPRQSDVMIVSGTVTKKMAPIVRRLYDQMPEPKWVIAMGSCATAGGPYVKSYCVVKGVDQIVPVDVYIPGCPPNPAALIYGINKLKEKIRYEAKTGKKVL.

4 residues coordinate [4Fe-4S] cluster: C53, C54, C118, and C148.

This sequence belongs to the complex I 20 kDa subunit family. In terms of assembly, NDH-1 is composed of 14 different subunits. Subunits NuoB, C, D, E, F, and G constitute the peripheral sector of the complex. It depends on [4Fe-4S] cluster as a cofactor.

It is found in the cell membrane. It catalyses the reaction a quinone + NADH + 5 H(+)(in) = a quinol + NAD(+) + 4 H(+)(out). NDH-1 shuttles electrons from NADH, via FMN and iron-sulfur (Fe-S) centers, to quinones in the respiratory chain. The immediate electron acceptor for the enzyme in this species is believed to be a menaquinone. Couples the redox reaction to proton translocation (for every two electrons transferred, four hydrogen ions are translocated across the cytoplasmic membrane), and thus conserves the redox energy in a proton gradient. This is NADH-quinone oxidoreductase subunit B from Anoxybacillus flavithermus (strain DSM 21510 / WK1).